The sequence spans 184 residues: FMRFamide-related peptides (184 aa).

The propeptide occupies 1-44 (MLVSSSVLKDDSSLRIFKESPNEFEYIIKRHDMDDRKEDTESKE). At Phe56 the chain carries Phenylalanine amide. The propeptide occupies 59-83 (GQSFFNNLDNSAFDNEIDSKVSRHP). Phe94 is modified (phenylalanine amide). Residues 97-107 (SGMKSTNDEQP) constitute a propeptide that is removed on maturation. Phe119 carries the phenylalanine amide modification. Positions 122 to 184 (NIQIVPTDFD…SLETNSNHRE (63 aa)) are excised as a propeptide.

The protein belongs to the FARP (FMRFamide related peptide) family. As to expression, expressed throughout the central nervous system.

It localises to the secreted. Its function is as follows. In insects, FMRFamide and related peptides have modulatory actions at skeletal neuromuscular junctions, and peptides that are immunologically related to FMRFamide are released into the circulation from neurohemal organs. In Camponotus floridanus (Florida carpenter ant), this protein is FMRFamide-related peptides.